The sequence spans 216 residues: RNA pyrophosphohydrolase (216 aa).

The 144-residue stretch at 6–149 (GFRPNVGIIL…KRDVYQLALT (144 aa)) folds into the Nudix hydrolase domain. A Nudix box motif is present at residues 38-59 (GGIKYGETPMQAMYRELHEETG).

Belongs to the Nudix hydrolase family. RppH subfamily. A divalent metal cation is required as a cofactor.

Functionally, accelerates the degradation of transcripts by removing pyrophosphate from the 5'-end of triphosphorylated RNA, leading to a more labile monophosphorylated state that can stimulate subsequent ribonuclease cleavage. The chain is RNA pyrophosphohydrolase from Burkholderia ambifaria (strain MC40-6).